The following is a 513-amino-acid chain: Ectonucleoside triphosphate diphosphohydrolase 1 (513 aa).

Residues 1–16 (MEDRRESELKVFCSKN) lie on the Cytoplasmic side of the membrane. A helical membrane pass occupies residues 17–37 (ILSILGFSCIIAVIALLALGL). Over 38-481 (TQNKALPENV…SPPLPHSTYV (444 aa)) the chain is Extracellular. Residue Asn-73 is glycosylated (N-linked (GlcNAc...) asparagine). Glu-174 (proton acceptor) is an active-site residue. Residues Asn-227 and Asn-245 are each glycosylated (N-linked (GlcNAc...) asparagine). Cystine bridges form between Cys-255–Cys-300 and Cys-281–Cys-327. 2 N-linked (GlcNAc...) asparagine glycosylation sites follow: Asn-307 and Asn-336. Cys-340 and Cys-345 are disulfide-bonded. A glycan (N-linked (GlcNAc...) asparagine) is linked at Asn-373. A disulfide bond links Cys-393 and Cys-416. Asn-460 carries N-linked (GlcNAc...) asparagine glycosylation. The helical transmembrane segment at 482–502 (FLMVLFSLILLAVIIVGIVVF) threads the bilayer. Over 503–513 (HKPSYFWKDMV) the chain is Cytoplasmic.

The protein belongs to the GDA1/CD39 NTPase family. As to quaternary structure, homodimer; disulfide-linked. Ca(2+) is required as a cofactor. Requires Mg(2+) as cofactor. Post-translationally, N-glycosylated. In terms of processing, the N-terminus is blocked. Palmitoylated on Cys-13; which is required for caveola targeting.

The protein localises to the membrane. The protein resides in the caveola. It carries out the reaction a ribonucleoside 5'-triphosphate + 2 H2O = a ribonucleoside 5'-phosphate + 2 phosphate + 2 H(+). The enzyme catalyses a ribonucleoside 5'-triphosphate + H2O = a ribonucleoside 5'-diphosphate + phosphate + H(+). The catalysed reaction is a ribonucleoside 5'-diphosphate + H2O = a ribonucleoside 5'-phosphate + phosphate + H(+). It catalyses the reaction ATP + 2 H2O = AMP + 2 phosphate + 2 H(+). It carries out the reaction ATP + H2O = ADP + phosphate + H(+). The enzyme catalyses ADP + H2O = AMP + phosphate + H(+). The catalysed reaction is CTP + 2 H2O = CMP + 2 phosphate + 2 H(+). It catalyses the reaction CTP + H2O = CDP + phosphate + H(+). It carries out the reaction CDP + H2O = CMP + phosphate + H(+). The enzyme catalyses GTP + 2 H2O = GMP + 2 phosphate + 2 H(+). The catalysed reaction is GTP + H2O = GDP + phosphate + H(+). It catalyses the reaction GDP + H2O = GMP + phosphate + H(+). It carries out the reaction ITP + 2 H2O = IMP + 2 phosphate + 2 H(+). The enzyme catalyses ITP + H2O = IDP + phosphate + H(+). The catalysed reaction is IDP + H2O = IMP + phosphate + H(+). It catalyses the reaction UTP + 2 H2O = UMP + 2 phosphate + 2 H(+). It carries out the reaction UTP + H2O = UDP + phosphate + H(+). The enzyme catalyses UDP + H2O = UMP + phosphate + H(+). In terms of biological role, catalyzes the hydrolysis of both di- and triphosphate nucleotides (NDPs and NTPs) and hydrolyze NTPs to nucleotide monophosphates (NMPs) in two distinct successive phosphate-releasing steps, with NDPs as intermediates and participates in the regulation of extracellular levels of nucleotides. By hydrolyzing proinflammatory ATP and platelet-activating ADP to AMP, it blocks platelet aggregation and supports blood flow. The protein is Ectonucleoside triphosphate diphosphohydrolase 1 of Bos taurus (Bovine).